Here is a 681-residue protein sequence, read N- to C-terminus: Rabphilin-3A (681 aa).

Residues 1 to 21 are disordered; the sequence is MTDTVVNRWMYPGDGPLQSND. The RabBD domain occupies 40–157; it reads QRKQEELTDE…KRSGAWFFKG (118 aa). The segment at 88 to 145 adopts an FYVE-type zinc-finger fold; it reads GDGVNRCILCGEQLGMLGSACVVCEDCKKNVCTKCGVETSNNRPHPVWLCKICLEQRE. 8 residues coordinate Zn(2+): Cys94, Cys97, Cys111, Cys114, Cys119, Cys122, Cys137, and Cys140. The tract at residues 162-375 is disordered; it reads VLPQPMPIKK…EEEANSYDSD (214 aa). The segment covering 199-208 has biased composition (basic and acidic residues); it reads ARGDMEDRRP. Arg223 carries the post-translational modification Omega-N-methylarginine. The segment covering 243–252 has biased composition (basic and acidic residues); the sequence is RDSEGWDHAH. The residue at position 271 (Ser271) is a Phosphoserine. Residues 278-296 are compositionally biased toward pro residues; the sequence is APAPVPSPAPPQPVQPGPP. Residues 347 to 356 are compositionally biased toward low complexity; it reads AAPYSQAAPA. A compositionally biased stretch (acidic residues) spans 362–375; the sequence is AEEEEEEANSYDSD. In terms of domain architecture, C2 1 spans 379-501; that stretch reads TLGALEFSLL…KANQRKNFNI (123 aa). The Ca(2+) site is built by Met409, Asp410, Asp416, Asp471, Glu472, Asp473, Glu479, Glu526, Asp568, Asp574, Asp628, Tyr629, Asp630, and Asp636. Residues 537–670 enclose the C2 2 domain; it reads ERGKILVSLM…NKDKKIERWH (134 aa). Ser679 and Ser680 each carry phosphoserine.

Interacts with RAB3B, RAB3C, RAB3D, RAB8A, RAB27A and RAB27B. Interacts with RAB3A; this interaction recruits RPH3A to synaptic vesicules. Interacts (via C2B domain) with SNAP25. Interacts with deubiquitinating enzyme CAND1; this interaction results in the deubiquitination of RPH3A. Interacts with GRIN2A and DLG4; this ternary complex regulates NMDA receptor composition at postsynaptic membranes. Interacts with SNCA. The cofactor is Ca(2+). Post-translationally, ubiquitinated. Deubiquitinated by CAND1 to prevent its degradation. Specifically expressed in brain.

The protein localises to the cytoplasmic vesicle. The protein resides in the secretory vesicle. It is found in the synaptic vesicle membrane. It localises to the cell projection. Its subcellular location is the dendritic spine. The protein localises to the postsynaptic cell membrane. The protein resides in the membrane. Functionally, plays an essential role in docking and fusion steps of regulated exocytosis. At the presynaptic level, RPH3A is recruited by RAB3A to the synaptic vesicle membrane in a GTP-dependent manner where it modulates synaptic vesicle trafficking and calcium-triggered neurotransmitter release. In the post-synaptic compartment, forms a ternary complex with GRIN2A and DLG4 and regulates NMDA receptor stability. Also plays a role in the exocytosis of arginine vasopressin hormone. This chain is Rabphilin-3A (Rph3a), found in Mus musculus (Mouse).